The sequence spans 139 residues: Growth factor (139 aa).

An N-terminal signal peptide occupies residues 1 to 19; that stretch reads MSMKYLMLLFATMIIRSFA. Residue Asn34 is glycosylated (N-linked (GlcNAc...) asparagine; by host). In terms of domain architecture, EGF-like spans 41 to 81; sequence AIRLCGPEGDGYCLHGDCIHARDINGMYCRCSHGYTGIRCQ. Cystine bridges form between Cys45-Cys58, Cys53-Cys69, and Cys71-Cys80. Asn95 carries N-linked (GlcNAc...) asparagine; by host glycosylation.

This sequence belongs to the orthopoxvirus OPG019 family.

Its subcellular location is the secreted. In terms of biological role, stimulates cellular proliferation (hyperplasia)and mobility around infected cells to promote rapid and efficient spread of infection. This Camelus protein is Growth factor (OPG019).